The following is a 331-amino-acid chain: Peroxidase 60 (331 aa).

The first 26 residues, methionine 1–glycine 26, serve as a signal peptide directing secretion. Cystine bridges form between cysteine 37–cysteine 113, cysteine 70–cysteine 75, cysteine 119–cysteine 321, and cysteine 198–cysteine 230. The active-site Proton acceptor is the histidine 68. Ca(2+)-binding residues include aspartate 69, glycine 74, aspartate 76, and serine 78. Proline 161 is a binding site for substrate. Histidine 191 provides a ligand contact to heme b. Threonine 192 is a binding site for Ca(2+). Asparagine 245 carries N-linked (GlcNAc...) asparagine glycosylation. Serine 248 and aspartate 253 together coordinate Ca(2+).

Belongs to the peroxidase family. Classical plant (class III) peroxidase subfamily. It depends on heme b as a cofactor. Requires Ca(2+) as cofactor. As to expression, expressed in roots, slightly in leaves.

Its subcellular location is the secreted. It carries out the reaction 2 a phenolic donor + H2O2 = 2 a phenolic radical donor + 2 H2O. Removal of H(2)O(2), oxidation of toxic reductants, biosynthesis and degradation of lignin, suberization, auxin catabolism, response to environmental stresses such as wounding, pathogen attack and oxidative stress. These functions might be dependent on each isozyme/isoform in each plant tissue. This Arabidopsis thaliana (Mouse-ear cress) protein is Peroxidase 60 (PER60).